The following is a 408-amino-acid chain: Substance-P receptor (408 aa).

Residues 1-32 are Extracellular-facing; that stretch reads MNSNISAQNDSALNSTIQNGTKINQFIQPPWQ. Residues asparagine 4, asparagine 9, asparagine 14, and asparagine 19 are each glycosylated (N-linked (GlcNAc...) asparagine). Residues 33 to 55 traverse the membrane as a helical segment; it reads IALWSVAYSIIVIVSLVGNIIVM. Residues 56–65 are Cytoplasmic-facing; sequence WIIIAHKRMR. A helical transmembrane segment spans residues 66 to 87; it reads TVTNYFLVNLAFAEASMSAFNT. Topologically, residues 88–107 are extracellular; that stretch reads VINFTYAIHNHWYYGLIYCK. Cysteine 106 and cysteine 181 are oxidised to a cystine. A helical membrane pass occupies residues 108 to 129; it reads FHNFFPISAVFTSIYSMTAIAL. At 130 to 149 the chain is on the cytoplasmic side; it reads DRYMAIIHPLKPRLSATATK. A helical membrane pass occupies residues 150-170; it reads IVICVIWSFSFCMAFPLGYYA. The Extracellular portion of the chain corresponds to 171 to 196; the sequence is DVYPMEGGDICYLNWPDSEENRKYEQ. A helical transmembrane segment spans residues 197–221; that stretch reads VYQVLVFCLIYILPLLVIGCAYTFI. Residues 222-250 are Cytoplasmic-facing; the sequence is GMTLWASEIPGDSSDRYHEQVVAKRKVVK. A helical transmembrane segment spans residues 251–272; that stretch reads MMIVVVCTFAICWLPFHIFFLL. The Extracellular segment spans residues 273–283; it reads QTLHEMTQKFY. Residues 284–308 form a helical membrane-spanning segment; the sequence is QQFYLAIMWLAMSSTMYNPIIYCCL. The Cytoplasmic portion of the chain corresponds to 309–408; sequence NDRFRIGFKH…SSSFYSNNLA (100 aa). Cysteine 323 is lipidated: S-palmitoyl cysteine. The tract at residues 366-408 is disordered; it reads DEEAEENGKSSKRLSLDLTSNGSSRSVCKTMSDSSSFYSNNLA. The span at 382-408 shows a compositional bias: polar residues; the sequence is DLTSNGSSRSVCKTMSDSSSFYSNNLA.

Belongs to the G-protein coupled receptor 1 family.

The protein resides in the cell membrane. This is a receptor for the tachykinin neuropeptide substance P. It is probably associated with G proteins that activate a phosphatidylinositol-calcium second messenger system. The protein is Substance-P receptor (TACR1) of Aquarana catesbeiana (American bullfrog).